We begin with the raw amino-acid sequence, 350 residues long: ALA-interacting subunit 5 (350 aa).

A disordered region spans residues 1–23 (MSSTAASSTVGGGGSSEISGVKK). Ser2 carries the N-acetylserine modification. A helical membrane pass occupies residues 50 to 70 (VILTFLVAGVVFIPLGVICLF). 2 N-linked (GlcNAc...) asparagine glycosylation sites follow: Asn181 and Asn231. Residues 304-324 (FLGIAYLTVGSICLFLAVTFA) form a helical membrane-spanning segment.

This sequence belongs to the CDC50/LEM3 family. Interacts with ALA2 and ALA3 in a heterologous system. As to expression, expressed in roots, leaves, stems, flowers and siliques.

Its subcellular location is the golgi apparatus membrane. The protein resides in the prevacuolar compartment membrane. The protein localises to the endoplasmic reticulum membrane. Required for the lipid transport activity of the ALA/ALIS P4-ATPase complex. The protein is ALA-interacting subunit 5 (ALIS5) of Arabidopsis thaliana (Mouse-ear cress).